The following is a 318-amino-acid chain: Probable carboxylesterase 1 (318 aa).

Methionine 1 is modified (N-acetylmethionine). The short motif at 79–81 is the Involved in the stabilization of the negatively charged intermediate by the formation of the oxyanion hole element; it reads HGG. Active-site residues include serine 163, aspartate 258, and histidine 290.

Belongs to the 'GDXG' lipolytic enzyme family. In terms of tissue distribution, expressed in roots, stems, flowers and siliques.

The enzyme catalyses a carboxylic ester + H2O = an alcohol + a carboxylate + H(+). In terms of biological role, carboxylesterase acting on esters with varying acyl chain length. This Arabidopsis thaliana (Mouse-ear cress) protein is Probable carboxylesterase 1 (CXE1).